A 369-amino-acid polypeptide reads, in one-letter code: MQTSNYGSLPTSRSAVVLGNDERLRIERHLPLPALRPNEVLVQVKAVAINPCDYKMHQRFPCPGAVDGCDFAGVIVGVGPEVLKFGLGDRVCGAVHGSNPLRPESGSFTDYMTSESEFTLKIPAGLSFEQAVGMGVTGIGTLGMALFRTLQLPGSLDRPATKPRTVLVHGGSSSVGTMAIQLLRLLGHVPIATCSPKNFALARRFGAEEVFDYNSPDCAAAIKAYTKNTLSYILDPFTDAKSVDLCYKAMGRAGGRYCCLEMYPEYVLQRKSIKVGFVMGPLLLGHRLALSQGYERDEDPEMRAFGVEWYKDVQKMLDRGLLKRHPIKLLGDSFEALIEGVEMLQRKEVSGEKLVVALDSEQSKPVLTK.

Residue 52 to 55 coordinates NADP(+); that stretch reads CDYK. Residue 137 to 144 coordinates substrate; sequence TGIGTLGM. Residues 195-198, Y213, and 260-261 contribute to the NADP(+) site; these read SPKN and LE. 280 to 284 is a binding site for substrate; it reads GPLLL. Residue 349–350 coordinates NADP(+); it reads VS.

It belongs to the zinc-containing alcohol dehydrogenase family. In terms of assembly, monomer.

The protein operates within mycotoxin biosynthesis. Its function is as follows. Trans-enoyl reductase; part of the gene cluster that mediates the biosynthesis of the mycotoxin pyrichalasin H, a tyrosine-derived cytochalasan that inhibits the growth of rice seedlings, but also inhibits lymphocyte capping and actin polymerization and alters cell morphology. Pyrichalasin H is indicated as the responsible agent for the genus-specific pathogenicity of M.grisea toward crabgrass. The first step in the pathway is catalyzed by the O-methyltransferase pyiA which methylates free tyrosine to generate the precursor O-methyltyrosine. The hybrid PKS-NRPS pyiS, assisted by the enoyl reductase pyiC, are responsible for fusion of the O-methyltyrosine precursor and the polyketide backbone. The polyketide synthase module (PKS) of pyiS is responsible for the synthesis of the polyketide backbone and the downstream nonribosomal peptide synthetase (NRPS) amidates the carboxyl end of the polyketide with the O-methyltyrosine precursor. As the NRPS A-domain demonstrates substrate tolerance, pyiS can also use phenylalanine, tyrosine and even para-chlorophenylalanine as amino acid precursor, which leads to the production of novel cytochalasans, including halogenated cytochalasans. Because pyiS lacks a designated enoylreductase (ER) domain, the required activity is provided the enoyl reductase pyiC. Reduction by the hydrolyase pyiE, followed by dehydration and intra-molecular Diels-Alder cyclization by the Diels-Alderase pyiF then yield the required isoindolone-fused macrocycle. The tailoring cytochrome P450 monooxygenases piyD and piyG catalyze the hydroxylation at C-18 and C-7, respectivily, whereas the short-chain dehydrogenase/reductase pyiH reduces the carbonyl at C-21 in preparation for the transfer of an acetyl group by the acetyltransferase pyiB. These 3 reactions whose order is not clear yet, lead to the production of O-methylpyrichalasin J, a deacetylated pyrichalasin H. Finally, pyiB to converts O-methylpyrichalasin J into the final product pyrichalasin H via acetylation of C-21. In Pyricularia grisea (Crabgrass-specific blast fungus), this protein is Trans-enoyl reductase pyiC.